A 476-amino-acid chain; its full sequence is Cardiolipin synthase (476 aa).

A run of 2 helical transmembrane segments spans residues 2–22 and 31–51; these read HLLI…IIFI and WAWI…YILF. PLD phosphodiesterase domains follow at residues 207-234 and 389-416; these read INYR…GDEY and EKGF…DIRS. Catalysis depends on residues histidine 212, lysine 214, aspartate 219, histidine 394, lysine 396, and aspartate 401.

It belongs to the phospholipase D family. Cardiolipin synthase subfamily.

It localises to the cell membrane. The enzyme catalyses 2 a 1,2-diacyl-sn-glycero-3-phospho-(1'-sn-glycerol) = a cardiolipin + glycerol. Catalyzes the reversible phosphatidyl group transfer from one phosphatidylglycerol molecule to another to form cardiolipin (CL) (diphosphatidylglycerol) and glycerol. This chain is Cardiolipin synthase (cls), found in Clostridium perfringens (strain SM101 / Type A).